A 702-amino-acid chain; its full sequence is Polyribonucleotide nucleotidyltransferase (702 aa).

Mg(2+)-binding residues include aspartate 487 and aspartate 493. The 60-residue stretch at 554–613 folds into the KH domain; sequence PRLLTIKIHPDKIREVIGKGGSTIQAITKETGTQIDIQDDGTIVIASVNAIAAQAAKARI. One can recognise an S1 motif domain in the interval 623-691; that stretch reads GRIYEGKVAK…KQGRIRLSMK (69 aa).

It belongs to the polyribonucleotide nucleotidyltransferase family. Component of the RNA degradosome, which is a multiprotein complex involved in RNA processing and mRNA degradation. It depends on Mg(2+) as a cofactor.

The protein resides in the cytoplasm. It carries out the reaction RNA(n+1) + phosphate = RNA(n) + a ribonucleoside 5'-diphosphate. Functionally, involved in mRNA degradation. Catalyzes the phosphorolysis of single-stranded polyribonucleotides processively in the 3'- to 5'-direction. The sequence is that of Polyribonucleotide nucleotidyltransferase from Stenotrophomonas maltophilia (strain R551-3).